The sequence spans 263 residues: (E)-2-((N-methylformamido)methylene)succinate hydrolase (263 aa).

S96 acts as the Nucleophile in catalysis. Active-site residues include N120 and H241.

The protein belongs to the AB hydrolase superfamily. In terms of assembly, monomer.

It carries out the reaction (E)-2-((N-methylformamido) methylene)succinate + 2 H2O + H(+) = succinate semialdehyde + methylamine + formate + CO2. Involved in the degradation of the pyridine ring of trigonelline (TG; N-methylnicotinate) into succinate and methylamine as carbon and nitrogen sources, respectively. Catalyzes the hydrolysis of (E)-2-((N-methylformamido)methylene)succinate (MFMS) into formic acid, succinate semialdehyde (SSA), methylamine and carbon dioxide. The chain is (E)-2-((N-methylformamido)methylene)succinate hydrolase from Acinetobacter baylyi (strain ATCC 33305 / BD413 / ADP1).